Consider the following 31-residue polypeptide: Cytochrome b6-f complex subunit 6 (31 aa).

A helical membrane pass occupies residues 4–24; the sequence is VIAYLGLLASVLIGTIVIYLG.

It belongs to the PetL family. In terms of assembly, the 4 large subunits of the cytochrome b6-f complex are cytochrome b6, subunit IV (17 kDa polypeptide, PetD), cytochrome f and the Rieske protein, while the 4 small subunits are PetG, PetL, PetM and PetN. The complex functions as a dimer.

Its subcellular location is the plastid. It is found in the chloroplast thylakoid membrane. Its function is as follows. Component of the cytochrome b6-f complex, which mediates electron transfer between photosystem II (PSII) and photosystem I (PSI), cyclic electron flow around PSI, and state transitions. PetL is important for photoautotrophic growth as well as for electron transfer efficiency and stability of the cytochrome b6-f complex. In Oltmannsiellopsis viridis (Marine flagellate), this protein is Cytochrome b6-f complex subunit 6.